Here is a 629-residue protein sequence, read N- to C-terminus: tRNA uridine 5-carboxymethylaminomethyl modification enzyme MnmG (629 aa).

FAD contacts are provided by residues 13-18 (GGGHAG), V125, and S180. 273–287 (GPRYCPSIEDKVMRF) serves as a coordination point for NAD(+). Residue Q370 coordinates FAD.

Belongs to the MnmG family. As to quaternary structure, homodimer. Heterotetramer of two MnmE and two MnmG subunits. The cofactor is FAD.

The protein localises to the cytoplasm. NAD-binding protein involved in the addition of a carboxymethylaminomethyl (cmnm) group at the wobble position (U34) of certain tRNAs, forming tRNA-cmnm(5)s(2)U34. The protein is tRNA uridine 5-carboxymethylaminomethyl modification enzyme MnmG of Salmonella schwarzengrund (strain CVM19633).